The primary structure comprises 414 residues: Esterase FrsA (414 aa).

This sequence belongs to the FrsA family.

The enzyme catalyses a carboxylic ester + H2O = an alcohol + a carboxylate + H(+). Catalyzes the hydrolysis of esters. This Shigella boydii serotype 4 (strain Sb227) protein is Esterase FrsA.